Reading from the N-terminus, the 275-residue chain is Phosphonoacetaldehyde hydrolase (275 aa).

D15 serves as the catalytic Nucleophile. The Mg(2+) site is built by D15 and A17. Catalysis depends on K56, which acts as the Schiff-base intermediate with substrate. D189 provides a ligand contact to Mg(2+).

The protein belongs to the HAD-like hydrolase superfamily. PhnX family. Homodimer. The cofactor is Mg(2+).

The enzyme catalyses phosphonoacetaldehyde + H2O = acetaldehyde + phosphate + H(+). Its function is as follows. Involved in phosphonate degradation. This Pseudomonas putida (strain W619) protein is Phosphonoacetaldehyde hydrolase.